Consider the following 430-residue polypeptide: Tol-Pal system protein TolB (430 aa).

A signal peptide spans 1-21 (MKQALRVAFGFLILWASVLHA).

It belongs to the TolB family. As to quaternary structure, the Tol-Pal system is composed of five core proteins: the inner membrane proteins TolA, TolQ and TolR, the periplasmic protein TolB and the outer membrane protein Pal. They form a network linking the inner and outer membranes and the peptidoglycan layer.

The protein resides in the periplasm. Functionally, part of the Tol-Pal system, which plays a role in outer membrane invagination during cell division and is important for maintaining outer membrane integrity. TolB occupies a key intermediary position in the Tol-Pal system because it communicates directly with both membrane-embedded components, Pal in the outer membrane and TolA in the inner membrane. This Shigella flexneri serotype 5b (strain 8401) protein is Tol-Pal system protein TolB.